A 448-amino-acid chain; its full sequence is DNA repair protein RadA (448 aa).

Residues C10 to C27 form a C4-type zinc finger. G96 to S103 contacts ATP. Residues K253–G257 carry the RadA KNRFG motif motif. Residues D351–M448 are lon-protease-like.

The protein belongs to the RecA family. RadA subfamily.

Its function is as follows. DNA-dependent ATPase involved in processing of recombination intermediates, plays a role in repairing DNA breaks. Stimulates the branch migration of RecA-mediated strand transfer reactions, allowing the 3' invading strand to extend heteroduplex DNA faster. Binds ssDNA in the presence of ADP but not other nucleotides, has ATPase activity that is stimulated by ssDNA and various branched DNA structures, but inhibited by SSB. Does not have RecA's homology-searching function. This Helicobacter pylori (strain J99 / ATCC 700824) (Campylobacter pylori J99) protein is DNA repair protein RadA.